A 217-amino-acid polypeptide reads, in one-letter code: MEHSTWHRKIKESLPPDYFARINQFLDQVYSQGRVYPKREHIFKALTETPYEDLKVLILGQDPYHGPGQAQGLSFSVPDSIAAPPSLQNILKELSEDIGKRDHHDLTSWAKQGVLLLNACLTVPEHQANAHAGLIWEPFTDAVIQLANAKESPVVFILWGGFARKKKAFITNPKHLVIESAHPSPLSAYRGFFGSRPFSKCNAFLKENQLEPIDWLQ.

The active-site Proton acceptor is the aspartate 62.

This sequence belongs to the uracil-DNA glycosylase (UDG) superfamily. UNG family.

The protein resides in the cytoplasm. The catalysed reaction is Hydrolyzes single-stranded DNA or mismatched double-stranded DNA and polynucleotides, releasing free uracil.. In terms of biological role, excises uracil residues from the DNA which can arise as a result of misincorporation of dUMP residues by DNA polymerase or due to deamination of cytosine. The sequence is that of Uracil-DNA glycosylase from Streptococcus uberis (strain ATCC BAA-854 / 0140J).